We begin with the raw amino-acid sequence, 425 residues long: Secernin-2 (425 aa).

Residue cysteine 12 is part of the active site. At threonine 52 the chain carries Phosphothreonine.

The protein belongs to the peptidase C69 family. Secernin subfamily.

The sequence is that of Secernin-2 (SCRN2) from Homo sapiens (Human).